The sequence spans 419 residues: MDKNYNLPVDAELFPEGCERCSLSKFMMWMAFVFVFFGWGLYAAYRVLAEGLGVTGLDDYFGFGLWITFDLAVIALGAGAFFSGLLRYILNIDPLKNIINLAVIIGFLCYSGAMLVLVLDIGQPLRAWFGYWHANVHSMLTEVIFCITCYCLVLIIEYVPLILENRQLNKNKLVHAVAHNFHVMMPLFAGIGAFLSTFHQGSLGGMYGVLFGRPYIYREGFFIWPWTFFLYVLSAVGSGPVFTVLVCTLMEKMTGRKLVSWEVKSLMGKIAGTMLMVYLIFKFADTYAWAYDLLPRQGLTFDQMFTSGWIYGKWMLWAELFYCGLVPAIILIVPALRNNPVLFYSAAILDCIGITINRYVMTVQALAIPVMPFDSWESYLPNWAEWGASVMIVAYAALVLSLSYRYLPIFPQEAELNRK.

The next 10 helical transmembrane spans lie at 23-43 (LSKF…GLYA), 61-81 (FGFG…AGAF), 98-118 (IINL…LVLV), 143-163 (VIFC…PLIL), 176-196 (AVAH…AFLS), 221-241 (FFIW…SGPV), 270-290 (IAGT…YAWA), 316-336 (LWAE…VPAL), 341-361 (VLFY…RYVM), and 383-403 (WAEW…LSLS).

It belongs to the NrfD family. The Qrc complex is composed of four subunits: QrcA, QrcB, QrcC and QrcD. Can form a supercomplex with the [NiFe] hydrogenase HynA1 and the tetraheme Type I cytochrome c3 TpIc(3), its physiological electron donors.

The protein resides in the cell inner membrane. Its function is as follows. Component of the respiratory Qrc complex, that catalyzes the reduction of the menaquinone pool using electrons transferred from the reduced periplasmic cytochrome c3, and which is probably involved in sulfate respiration. Is likely essential for growth on H(2) or formate since the periplasmic hydrogenases and/or formate dehydrogenases act as primary electron donors for the Qrc complex. The QrcD subunit anchors the protein complex to the membrane and likely interacts with the quinone pool. The sequence is that of Menaquinone reductase, integral membrane subunit from Nitratidesulfovibrio vulgaris (strain ATCC 29579 / DSM 644 / CCUG 34227 / NCIMB 8303 / VKM B-1760 / Hildenborough) (Desulfovibrio vulgaris).